The sequence spans 2230 residues: Genome polyprotein (2230 aa).

Positions 59 to 80 (TAEVGAHQTEPLKTSVDKPGSK) are disordered. 2 consecutive short sequence motifs ((L)YPX(n)L motif) follow at residues 171–175 (YPHGL) and 204–209 (YPVWEL). The segment at 770-840 (MLDRIASGDL…PRKVKGLFSQ (71 aa)) is involved in P1-2A pentamerization. The chain crosses the membrane as a helical span at residues 1015-1035 (TVEIINTVLCFVKSGILLYVI). Positions 1047-1074 (IGLLQVMNYADIGCSVISCGKIFSKMLE) are membrane-penetrating ability. Positions 1131–1156 (KKKDVLNVLKENQHRIEKAIEEADQF) form a coiled coil. Positions 1208-1370 (HQKLKNLGSI…SFYKNAHNDM (163 aa)) constitute an SF3 helicase domain. 1234–1241 (GKRGGGKS) serves as a coordination point for ATP. A helical transmembrane segment spans residues 1466 to 1486 (WVAIGAAVGVLGVLVGGWFVY). Residue Tyr1501 is modified to O-(5'-phospho-RNA)-tyrosine. The 215-residue stretch at 1516–1730 (DPVDSQSTLE…VAKLVTQEMF (215 aa)) folds into the Peptidase C3 domain. Residues His1565, Asp1605, and Cys1693 each act as for protease 3C activity in the active site. The RdRp catalytic domain maps to 1979–2100 (DVGLDLDFSS…VFSRNVQIDN (122 aa)).

This sequence belongs to the picornaviridae polyprotein family. As to quaternary structure, homodimer. Homomultimer; probably interacts with membranes in a multimeric form. Seems to assemble into amyloid-like fibers. Homodimer. Monomer. Interacts with protein 3CD. In terms of assembly, interacts with host ACBD3. As to quaternary structure, interacts with protein 3AB. Interacts with human MAVS. In terms of assembly, homodimer; disulfide-linked. As to quaternary structure, homopentamer. Homooligomer. Interacts with capsid protein VP2. Interacts with capsid protein VP3. In terms of assembly, interacts with capsid protein VP1. Interacts with capsid protein VP3. As to quaternary structure, interacts with capsid protein VP1. Interacts with capsid protein VP2. In terms of processing, specific enzymatic cleavages by viral protease in vivo yield a variety of precursors and mature proteins. Polyprotein processing intermediates are produced, such as P1-2A which is a functional precursor of the structural proteins, VP0 which is a VP4-VP2 precursor, VP1-2A precursor, 3ABC precursor which is a stable and catalytically active precursor of 3A, 3B and 3C proteins, 3AB and 3CD precursors. The assembly signal 2A is removed from VP1-2A by a host protease, possibly host Cathepsin L. This cleavage occurs over a region of 3 amino-acids probably generating VP1 proteins with heterogeneous C-termini. During virion maturation, immature virions are rendered infectious following cleavage of VP0 into VP4 and VP2. This maturation seems to be an autocatalytic event triggered by the presence of RNA in the capsid and is followed by a conformational change of the particle. Post-translationally, the assembly signal 2A is removed from VP1-2A by a host protease, possibly host Cathepsin L in naked virions. This cleavage does not occur in enveloped virions. This cleavage occurs over a region of 3 amino-acids probably generating VP1 proteins with heterogeneous C-termini. In terms of processing, VPg is uridylylated prior to priming replication into VPg-pUpU. Unlike other picornaviruses, does not seem to be myristoylated.

It is found in the virion. Its subcellular location is the host endosome. The protein resides in the host multivesicular body. The protein localises to the host membrane. It localises to the host mitochondrion outer membrane. It is found in the host cytoplasm. Its subcellular location is the host cytoplasmic vesicle membrane. It carries out the reaction RNA(n) + a ribonucleoside 5'-triphosphate = RNA(n+1) + diphosphate. The enzyme catalyses a ribonucleoside 5'-triphosphate + H2O = a ribonucleoside 5'-diphosphate + phosphate + H(+). The catalysed reaction is Selective cleavage of Gln-|-Gly bond in the poliovirus polyprotein. In other picornavirus reactions Glu may be substituted for Gln, and Ser or Thr for Gly.. Its function is as follows. Capsid proteins VP1, VP2, and VP3 form a closed capsid enclosing the viral positive strand RNA genome. All these proteins contain a beta-sheet structure called beta-barrel jelly roll. Together they form an icosahedral capsid (T=3) composed of 60 copies of each VP1, VP2, and VP3, with a diameter of approximately 300 Angstroms. VP1 is situated at the 12 fivefold axes, whereas VP2 and VP3 are located at the quasi-sixfold axes. The naked capsid interacts with the host receptor HAVCR1 to provide virion attachment to and probably entry into the target cell. VP0 precursor is a component of the immature procapsids. In terms of biological role, plays a role in the assembly of the 12 pentamers into an icosahedral structure. Has not been detected in mature virions, supposedly owing to its small size. Functionally, precursor component of immature procapsids that corresponds to an extended form of the structural protein VP1. After maturation, possibly by the host Cathepsin L, the assembly signal 2A is cleaved to give rise to the mature VP1 protein. Its function is as follows. Functions as a viroporin. Affects membrane integrity and causes an increase in membrane permeability. Involved in host intracellular membrane rearrangements probably to give rise to the viral factories. Does not disrupt calcium homeostasis or glycoprotein trafficking. Antagonizes the innate immune response of the host by suppressing IFN-beta synthesis, which it achieves by interfering with the RIG-I/IFIH1 pathway. Affects membrane integrity and causes an increase in membrane permeability. In terms of biological role, associates with and induces structural rearrangements of intracellular membranes. Displays RNA-binding activity. Functionally, the precursor 3ABC is targeted to the mitochondrial membrane where protease 3C activity cleaves and inhibits the host antiviral protein MAVS, thereby disrupting activation of IRF3 through the IFIH1/MDA5 pathway. In vivo, the protease activity of 3ABC precursor is more efficient in cleaving the 2BC precursor than that of protein 3C. The 3ABC precursor may therefore play a role in the proteolytic processing of the polyprotein. Possible viroporin. Its function is as follows. Interacts with the 3CD precursor and with RNA structures found at both the 5'- and 3'-termini of the viral genome. Since the 3AB precursor contains the hydrophobic domain 3A, it probably anchors the whole viral replicase complex to intracellular membranes on which viral RNA synthesis occurs. May serve as membrane anchor to the 3AB and 3ABC precursors via its hydrophobic domain. May interact with RNA. In terms of biological role, acts as a primer for viral RNA replication and remains covalently bound to viral genomic RNA. VPg is uridylylated prior to priming replication into VPg-pUpU. The VPg-pUpU is then used as primer on the genomic RNA poly(A) by the RNA-dependent RNA polymerase to replicate the viral genome. Functionally, cysteine protease that generates mature viral proteins from the precursor polyprotein. In addition to its proteolytic activity, it binds to viral RNA, and thus influences viral genome replication. RNA and substrate bind cooperatively to the protease. Cleaves IKBKG/NEMO to impair innate immune signaling. Cleaves host PABPC1 which may participate in the switch of viral translation to RNA synthesis. Its function is as follows. Interacts with the 3AB precursor and with RNA structures found at both the 5'- and 3'-termini of the viral genome. Disrupts TLR3 signaling by degrading the host adapter protein TICAM1/TRIF. RNA-directed RNA polymerase 3D-POL replicates genomic and antigenomic RNA by recognizing replications specific signals. The chain is Genome polyprotein from Callithrix (Owl-faced monkey).